Reading from the N-terminus, the 471-residue chain is 5-hydroxytryptamine receptor 2B (471 aa).

Residues 1–26 (MFQAAVGPLQTNISLPEETPGLELNW) are Extracellular-facing. Asn-12 carries an N-linked (GlcNAc...) asparagine glycan. A helical transmembrane segment spans residues 27–49 (AALLIVMVIIPTIGGNILVILAV). The Cytoplasmic portion of the chain corresponds to 50–60 (WLEKKLQNATN). A helical transmembrane segment spans residues 61 to 83 (FFLMSLAVADLLVGLLVMPIALI). Residues 84–99 (TILYDSDWPLPEPLCP) lie on the Extracellular side of the membrane. Cys-98 and Cys-182 are joined by a disulfide. The chain crosses the membrane as a helical span at residues 100–121 (IWLFLDVLFSTASIMHLCAISL). Residues Asp-105 and Thr-110 each coordinate ergotamine. Residues 122 to 124 (DRY) carry the DRY motif; important for ligand-induced conformation changes motif. Residues 122-141 (DRYIAIKKPIQHSQYKSRAK) are Cytoplasmic-facing. A helical membrane pass occupies residues 142–162 (VMLKIALVWLISICIAIPIPI). Over 163-191 (KGLRNYPHPNNITFTSNHTCVLKTDTFQE) the chain is Extracellular. N-linked (GlcNAc...) asparagine glycosylation is found at Asn-173 and Asn-179. Leu-184 contacts ergotamine. Positions 187–190 (DTFQ) match the [DE]RFG motif; may stabilize a conformation that preferentially activates signaling via beta-arrestin family members motif. A helical membrane pass occupies residues 192–214 (FIIFGSLVAFFIPLTIMMIIYFL). Topologically, residues 215-308 (TVRVLRKKVY…TLTNEQRASK (94 aa)) are cytoplasmic. A helical transmembrane segment spans residues 309 to 329 (VLGIVFLLFVVMWCPFFITNI). The Extracellular portion of the chain corresponds to 330–344 (TSALCGPCDANIIGR). A disulfide bridge links Cys-334 with Cys-337. A helical transmembrane segment spans residues 345-366 (LMEIFSWVGYVSSGINPLVYTL). The NPxxY motif; important for ligand-induced conformation changes and signaling signature appears at 360–364 (NPLVY). Topologically, residues 367 to 471 (FNKTFRQAFT…CKQEERVSCV (105 aa)) are cytoplasmic. Residue Cys-381 is the site of S-palmitoyl cysteine attachment. The short motif at 469–471 (SCV) is the PDZ-binding element.

Belongs to the G-protein coupled receptor 1 family. As to expression, detected in brain, heart and gut.

The protein resides in the cell membrane. It is found in the synapse. It localises to the synaptosome. G-protein coupled receptor for 5-hydroxytryptamine (serotonin). Also functions as a receptor for various ergot alkaloid derivatives and psychoactive substances. Ligand binding causes a conformation change that triggers signaling via guanine nucleotide-binding proteins (G proteins) and modulates the activity of downstream effectors. HTR2B is coupled to G(q)/G(11) G alpha proteins and activates phospholipase C-beta, releasing diacylglycerol (DAG) and inositol 1,4,5-trisphosphate (IP3) second messengers that modulate the activity of phosphatidylinositol 3-kinase and promote the release of Ca(2+) ions from intracellular stores, respectively. Beta-arrestin family members inhibit signaling via G proteins and mediate activation of alternative signaling pathways. Plays a role in the regulation of dopamine and 5-hydroxytryptamine release, 5-hydroxytryptamine uptake and in the regulation of extracellular dopamine and 5-hydroxytryptamine levels, and thereby affects neural activity. In Dichotomyctere fluviatilis (Green pufferfish), this protein is 5-hydroxytryptamine receptor 2B (htr2b).